Consider the following 169-residue polypeptide: MANRQKMSKTRDKKPDWQERVVQIRRVSKVVKGGKKLSFRAIVVIGNERGQVGVGIGKASDVINAVKKAAADGKKHVVEVPLTRSNSIPHPIDGIGGAARVIMRPSAEGTGVIAGGAVRTVLELAGVRNILAKQLGSNNPLNNARAAMNALSRLKTFSQFAKDRGVIAE.

The S5 DRBM domain occupies 17–80 (WQERVVQIRR…ADGKKHVVEV (64 aa)).

It belongs to the universal ribosomal protein uS5 family. Part of the 30S ribosomal subunit. Contacts protein S4.

The protein localises to the plastid. Its subcellular location is the cyanelle. Its function is as follows. With S4 and S12 plays an important role in translational accuracy. This Cyanophora paradoxa protein is Small ribosomal subunit protein uS5c (rps5).